We begin with the raw amino-acid sequence, 422 residues long: Ubiquitin-conjugating enzyme E2 Q1 (422 aa).

Methionine 1 is subject to N-acetylmethionine. A compositionally biased stretch (low complexity) spans 1–15; that stretch reads MQQPQPQGQQQPGPG. Disordered regions lie at residues 1-40 and 174-221; these read MQQP…PGPC and PLPA…EDDG. Gly residues predominate over residues 16 to 35; it reads QQLGGQGAAPGAGGGPGGGP. Acidic residues predominate over residues 185–200; that stretch reads VSSEDEDEEMPEDTED. Positions 212–221 are enriched in basic and acidic residues; the sequence is AEGKKSEDDG. In terms of domain architecture, UBC core spans 251 to 415; sequence QATDRLMKEL…VQIHEKNGWY (165 aa). Cysteine 351 serves as the catalytic Glycyl thioester intermediate.

It belongs to the ubiquitin-conjugating enzyme family. As to quaternary structure, monomer and homodimer. Only the homodimer is linked to ubiquitin through thiolester activation. Interacts (via N-terminus) with B4GALT1 (via N-terminal cytoplasmic domain). The interaction is direct. Post-translationally, autoubiquitinated in vitro in the presence of NEDD4L. In terms of tissue distribution, widely expressed.

Its subcellular location is the nucleus. The protein localises to the cell projection. The protein resides in the filopodium. It is found in the cytoplasm. It localises to the cytosol. It catalyses the reaction S-ubiquitinyl-[E1 ubiquitin-activating enzyme]-L-cysteine + [E2 ubiquitin-conjugating enzyme]-L-cysteine = [E1 ubiquitin-activating enzyme]-L-cysteine + S-ubiquitinyl-[E2 ubiquitin-conjugating enzyme]-L-cysteine.. It functions in the pathway protein modification; protein ubiquitination. In terms of biological role, catalyzes the covalent attachment of ubiquitin to other proteins. May be involved in hormonal homeostasis in females. Involved in regulation of B4GALT1 cell surface expression, B4GALT1-mediated cell adhesion to laminin and embryoid body formation. This Homo sapiens (Human) protein is Ubiquitin-conjugating enzyme E2 Q1 (UBE2Q1).